The primary structure comprises 337 residues: Secreted effector protein EspF(U) (337 aa).

5 repeat units span residues 96–142, 143–189, 190–236, 237–283, and 284–330. A 5 X 48 AA approximate tandem repeats region spans residues 96-330; the sequence is IKPARSMAEH…RLMQHLAEHG (235 aa). A disordered region spans residues 291-312; it reads AEHIPPAPNWPAPTPPVQNEQS. Residues 295 to 306 show a composition bias toward pro residues; the sequence is PPAPNWPAPTPP.

It belongs to the EspF(U)/TccP family. As to quaternary structure, interacts with host BAIAP2 and host WASL/N-WASP. Can also interact with host proteins BAIAP2L1 and WAS/WASP.

It is found in the secreted. The protein resides in the host cytoplasm. Its function is as follows. Required for efficient pedestal formation in host epithelial cells during infection. Acts as an intermediate between Tir (via host BAIAP2) and host WASL/N-WASP. Directly binds and activates WASL/N-WASP, which stimulates actin polymerization and leads to the formation of actin pedestals at the sites of bacterial adhesion. This chain is Secreted effector protein EspF(U) (espF(U)), found in Escherichia coli O157:H7.